A 1679-amino-acid chain; its full sequence is Protein MLP2 (1679 aa).

Coiled-coil stretches lie at residues 32–176, 233–466, 516–1064, and 1099–1491; these read AKFE…KYDT, YNKF…RQVK, FSNV…EREL, and KLVS…ENAG. Short sequence motifs (bipartite nuclear localization signal) lie at residues 417-433, 639-655, and 1433-1449; these read KRSTELLETVSLTKRKQ, RKELLIYKKSQCKKKTT, and KKEWLKEYEDETLRRIK. Disordered regions lie at residues 1495–1521 and 1632–1679; these read FLDNKGSGEDAEEELWNSPSKGNSERP and DLTN…ASNE. Polar residues-rich tracts occupy residues 1511-1520 and 1646-1661; these read NSPSKGNSER and IGSTSKRPIESGTSSD. Serine 1512 bears the Phosphoserine mark. Residues 1662-1671 are compositionally biased toward basic and acidic residues; that stretch reads PDTKKVKESP. Residue serine 1670 is modified to Phosphoserine.

As to quaternary structure, component of the nuclear complex (NPC). NPC constitutes the exclusive means of nucleocytoplasmic transport. NPCs allow the passive diffusion of ions and small molecules and the active, nuclear transport receptor-mediated bidirectional transport of macromolecules such as proteins, RNAs, ribonucleoparticles (RNPs), and ribosomal subunits across the nuclear envelope. Due to its 8-fold rotational symmetry, all subunits are present with 8 copies or multiples thereof. Interacts with NUP60 and NIC96, which tether it to the nuclear pore complex. Component of the spindle pole body core in which it interacts directly with SPC110, SPC42 and SPC29. Also interacts with YKU70 (HDF1) and MLP1.

The protein resides in the nucleus. Its subcellular location is the cytoplasm. It is found in the cytoskeleton. The protein localises to the microtubule organizing center. It localises to the spindle pole body. The protein resides in the nuclear pore complex. Together with the closely related MLP1, involved in the structural and functional organization of perinuclear chromatin. MLP1/MLP2 associate with the nuclear pore complex and form filamentous structures along the nuclear periphery. Has a role in the localization of Esc1 to nucleolar regions. Together with MLP1, mediates tethering of the some telomeres to the nuclear periphery, probably mediated by YKU70/YKU80 (HDF1/HDF2) heterodimer and show perinuclear location dependent silencing. MLP1 and MLP2 are involved in telomere length regulation but not silencing or telomere anchoring. Plays a role in the incorporation of components into the spindle pole body. Involved in double-strand break repair, probably also mediated by the YKU70/YKU80 (HDF1/HDF2) heterodimer. This is Protein MLP2 (MLP2) from Saccharomyces cerevisiae (strain ATCC 204508 / S288c) (Baker's yeast).